The primary structure comprises 391 residues: 2-deoxy-scyllo-inosose synthase (391 aa).

Residues aspartate 42, 73 to 76 (EVHK), 105 to 109 (GVTGN), 129 to 130 (TT), 140 to 142 (SLK), and 151 to 152 (KN) contribute to the NAD(+) site. Lysine 142 is an active-site residue. Residue glutamate 184 coordinates Co(2+). Glutamate 244 is a catalytic residue. Co(2+) contacts are provided by histidine 247 and histidine 263.

The protein belongs to the sugar phosphate cyclases superfamily. DOI synthase family. NAD(+) serves as cofactor. The cofactor is Co(2+).

It carries out the reaction D-glucose 6-phosphate = 2-deoxy-L-scyllo-inosose + phosphate. It participates in metabolic intermediate biosynthesis; 2-deoxystreptamine biosynthesis; 2-deoxystreptamine from D-glucose 6-phosphate: step 1/4. It functions in the pathway antibiotic biosynthesis; ribostamycin biosynthesis. Its function is as follows. Catalyzes the intramolecular carbocycle formation from D-glucose-6-phosphate to 2-deoxy-scyllo-inosose (DOI). This chain is 2-deoxy-scyllo-inosose synthase (rbmA), found in Streptomyces ribosidificus.